A 362-amino-acid polypeptide reads, in one-letter code: Chorismate synthase (362 aa).

Residues arginine 48 and arginine 54 each contribute to the NADP(+) site. Residues 125–127 (RSS), 238–239 (NA), glycine 278, 293–297 (KPTSS), and arginine 319 contribute to the FMN site.

This sequence belongs to the chorismate synthase family. As to quaternary structure, homotetramer. Requires FMNH2 as cofactor.

It carries out the reaction 5-O-(1-carboxyvinyl)-3-phosphoshikimate = chorismate + phosphate. The protein operates within metabolic intermediate biosynthesis; chorismate biosynthesis; chorismate from D-erythrose 4-phosphate and phosphoenolpyruvate: step 7/7. Catalyzes the anti-1,4-elimination of the C-3 phosphate and the C-6 proR hydrogen from 5-enolpyruvylshikimate-3-phosphate (EPSP) to yield chorismate, which is the branch point compound that serves as the starting substrate for the three terminal pathways of aromatic amino acid biosynthesis. This reaction introduces a second double bond into the aromatic ring system. In Tolumonas auensis (strain DSM 9187 / NBRC 110442 / TA 4), this protein is Chorismate synthase.